Reading from the N-terminus, the 462-residue chain is tRNA-2-methylthio-N(6)-dimethylallyladenosine synthase (462 aa).

Residues 18 to 138 (RKVFVKTYGC…LPNALARVRS (121 aa)) enclose the MTTase N-terminal domain. [4Fe-4S] cluster-binding residues include Cys27, Cys63, Cys101, Cys179, Cys183, and Cys186. The Radical SAM core domain maps to 165 to 397 (RKRGVSAFLT…QALLSEQQYA (233 aa)). The 63-residue stretch at 400 to 462 (DSMIGREMDV…TNSLIAQKLA (63 aa)) folds into the TRAM domain.

The protein belongs to the methylthiotransferase family. MiaB subfamily. Monomer. It depends on [4Fe-4S] cluster as a cofactor.

It localises to the cytoplasm. The enzyme catalyses N(6)-dimethylallyladenosine(37) in tRNA + (sulfur carrier)-SH + AH2 + 2 S-adenosyl-L-methionine = 2-methylsulfanyl-N(6)-dimethylallyladenosine(37) in tRNA + (sulfur carrier)-H + 5'-deoxyadenosine + L-methionine + A + S-adenosyl-L-homocysteine + 2 H(+). Catalyzes the methylthiolation of N6-(dimethylallyl)adenosine (i(6)A), leading to the formation of 2-methylthio-N6-(dimethylallyl)adenosine (ms(2)i(6)A) at position 37 in tRNAs that read codons beginning with uridine. In Brucella anthropi (strain ATCC 49188 / DSM 6882 / CCUG 24695 / JCM 21032 / LMG 3331 / NBRC 15819 / NCTC 12168 / Alc 37) (Ochrobactrum anthropi), this protein is tRNA-2-methylthio-N(6)-dimethylallyladenosine synthase.